The sequence spans 470 residues: Cysteine--tRNA ligase (470 aa).

C27 serves as a coordination point for Zn(2+). The 'HIGH' region signature appears at 29–39 (PTVYNHIHIGN). Residues C207, H232, and E236 each contribute to the Zn(2+) site. The 'KMSKS' region motif lies at 265–269 (KMAKS). Residue K268 participates in ATP binding.

The protein belongs to the class-I aminoacyl-tRNA synthetase family. As to quaternary structure, monomer. The cofactor is Zn(2+).

It is found in the cytoplasm. The enzyme catalyses tRNA(Cys) + L-cysteine + ATP = L-cysteinyl-tRNA(Cys) + AMP + diphosphate. This chain is Cysteine--tRNA ligase, found in Rubrobacter xylanophilus (strain DSM 9941 / JCM 11954 / NBRC 16129 / PRD-1).